The chain runs to 105 residues: Large ribosomal subunit protein eL36 (105 aa).

It belongs to the eukaryotic ribosomal protein eL36 family. Component of the large ribosomal subunit.

The protein localises to the cytoplasm. It localises to the cytosol. Component of the large ribosomal subunit. The ribosome is a large ribonucleoprotein complex responsible for the synthesis of proteins in the cell. The polypeptide is Large ribosomal subunit protein eL36 (rpl36) (Xenopus laevis (African clawed frog)).